Reading from the N-terminus, the 147-residue chain is Large ribosomal subunit protein bL9 (147 aa).

Belongs to the bacterial ribosomal protein bL9 family.

In terms of biological role, binds to the 23S rRNA. This chain is Large ribosomal subunit protein bL9, found in Geotalea uraniireducens (strain Rf4) (Geobacter uraniireducens).